Here is a 279-residue protein sequence, read N- to C-terminus: 3-methyl-2-oxobutanoate hydroxymethyltransferase (279 aa).

Residues aspartate 44 and aspartate 83 each contribute to the Mg(2+) site. 3-methyl-2-oxobutanoate-binding positions include aspartate 44–serine 45, aspartate 83, and lysine 113. Glutamate 115 serves as a coordination point for Mg(2+). Glutamate 182 functions as the Proton acceptor in the catalytic mechanism.

Belongs to the PanB family. In terms of assembly, homodecamer; pentamer of dimers. Requires Mg(2+) as cofactor.

It localises to the cytoplasm. The catalysed reaction is 3-methyl-2-oxobutanoate + (6R)-5,10-methylene-5,6,7,8-tetrahydrofolate + H2O = 2-dehydropantoate + (6S)-5,6,7,8-tetrahydrofolate. Its pathway is cofactor biosynthesis; (R)-pantothenate biosynthesis; (R)-pantoate from 3-methyl-2-oxobutanoate: step 1/2. Functionally, catalyzes the reversible reaction in which hydroxymethyl group from 5,10-methylenetetrahydrofolate is transferred onto alpha-ketoisovalerate to form ketopantoate. The polypeptide is 3-methyl-2-oxobutanoate hydroxymethyltransferase (Dehalococcoides mccartyi (strain CBDB1)).